Here is a 350-residue protein sequence, read N- to C-terminus: Eukaryotic translation initiation factor 3 subunit I (350 aa).

WD repeat units lie at residues 8-49 (GHER…GTLE), 51-89 (HQGV…CVYT), 91-135 (DSPS…ATLS), 149-188 (SEGS…LVTS), 198-240 (EKNV…KVYK), and 296-335 (GHFG…QDFL).

It belongs to the eIF-3 subunit I family. In terms of assembly, component of the eukaryotic translation initiation factor 3 (eIF-3) complex.

It is found in the cytoplasm. Functionally, component of the eukaryotic translation initiation factor 3 (eIF-3) complex, which is involved in protein synthesis of a specialized repertoire of mRNAs and, together with other initiation factors, stimulates binding of mRNA and methionyl-tRNAi to the 40S ribosome. The eIF-3 complex specifically targets and initiates translation of a subset of mRNAs involved in cell proliferation. The protein is Eukaryotic translation initiation factor 3 subunit I of Candida albicans (strain SC5314 / ATCC MYA-2876) (Yeast).